A 90-amino-acid polypeptide reads, in one-letter code: Lectin-1 (90 aa).

Gln1 bears the Pyrrolidone carboxylic acid mark. A disulfide bridge links Cys46 with Cys71.

Post-translationally, the N-terminus is blocked. In terms of processing, contains seven disulfide bonds. Proteolytically cleaved. Major mature form may consist of cleaved, disulfide-bonded N-terminal and C-terminal chains.

Its function is as follows. Lectin with specificity for complex N-linked glycans and O-linked glycans. Has hemagglutinating activity towards rabbit erythrocytes. The chain is Lectin-1 from Hypnea musciformis (Red alga).